The sequence spans 431 residues: Na(+)-translocating NADH-quinone reductase subunit F (431 aa).

A helical membrane pass occupies residues 9–29 (FICIASLIFCAIGVILAGVIL). Residues 39-133 (HPCKLKINDN…DMSLEIEERY (95 aa)) form the 2Fe-2S ferredoxin-type domain. Cysteine 76, cysteine 82, cysteine 85, and cysteine 117 together coordinate [2Fe-2S] cluster. An FAD-binding FR-type domain is found at 136–286 (ASSWEGTVIS…SGPYGESFMK (151 aa)). The catalytic stretch occupies residues 289-413 (DRPLIFLIGG…PLHNSSILKL (125 aa)).

This sequence belongs to the NqrF family. Composed of six subunits; NqrA, NqrB, NqrC, NqrD, NqrE and NqrF. It depends on [2Fe-2S] cluster as a cofactor. Requires FAD as cofactor.

It localises to the cell inner membrane. It carries out the reaction a ubiquinone + n Na(+)(in) + NADH + H(+) = a ubiquinol + n Na(+)(out) + NAD(+). Functionally, NQR complex catalyzes the reduction of ubiquinone-1 to ubiquinol by two successive reactions, coupled with the transport of Na(+) ions from the cytoplasm to the periplasm. The first step is catalyzed by NqrF, which accepts electrons from NADH and reduces ubiquinone-1 to ubisemiquinone by a one-electron transfer pathway. In Chlamydia pneumoniae (Chlamydophila pneumoniae), this protein is Na(+)-translocating NADH-quinone reductase subunit F.